Reading from the N-terminus, the 466-residue chain is Chromosomal replication initiator protein DnaA (466 aa).

Positions 1–86 (MSLSLWQQCL…EVGTKPVTQT (86 aa)) are domain I, interacts with DnaA modulators. Positions 86-129 (TLKTPVHNVVAPTQTTTAQPQRVAPAARSGWDNVPAPAEPTYRS) are domain II. Residues 130–346 (NVNVKHTFDN…GALNRVIANA (217 aa)) form a domain III, AAA+ region region. 4 residues coordinate ATP: glycine 174, glycine 176, lysine 177, and threonine 178. The segment at 347-466 (NFTGRAITID…FSNLIRTLSS (120 aa)) is domain IV, binds dsDNA.

This sequence belongs to the DnaA family. As to quaternary structure, oligomerizes as a right-handed, spiral filament on DNA at oriC.

It is found in the cytoplasm. Functionally, plays an essential role in the initiation and regulation of chromosomal replication. ATP-DnaA binds to the origin of replication (oriC) to initiate formation of the DNA replication initiation complex once per cell cycle. Binds the DnaA box (a 9 base pair repeat at the origin) and separates the double-stranded (ds)DNA. Forms a right-handed helical filament on oriC DNA; dsDNA binds to the exterior of the filament while single-stranded (ss)DNA is stabiized in the filament's interior. The ATP-DnaA-oriC complex binds and stabilizes one strand of the AT-rich DNA unwinding element (DUE), permitting loading of DNA polymerase. After initiation quickly degrades to an ADP-DnaA complex that is not apt for DNA replication. Binds acidic phospholipids. This Salmonella dublin (strain CT_02021853) protein is Chromosomal replication initiator protein DnaA.